The following is a 210-amino-acid chain: Probable septum site-determining protein MinC (210 aa).

This sequence belongs to the MinC family. In terms of assembly, interacts with MinD and FtsZ.

Cell division inhibitor that blocks the formation of polar Z ring septums. Rapidly oscillates between the poles of the cell to destabilize FtsZ filaments that have formed before they mature into polar Z rings. Prevents FtsZ polymerization. The sequence is that of Probable septum site-determining protein MinC from Thermotoga sp. (strain RQ2).